The primary structure comprises 702 residues: Autophagy-related protein 9 (702 aa).

Topologically, residues Met1–His205 are cytoplasmic. The segment at Gln35 to Phe128 is disordered. Residues Leu38 to Pro47 are compositionally biased toward acidic residues. Low complexity predominate over residues Ser94 to Pro107. The span at Glu108–Lys120 shows a compositional bias: polar residues. Residues Arg206–Ile223 traverse the membrane as a helical segment. Over Thr224–Ser251 the chain is Lumenal. Residues Pro252–Ile270 traverse the membrane as a helical segment. Residues Tyr271–Leu421 are Cytoplasmic-facing. Residues Asn422 to His446 lie within the membrane without spanning it. The Cytoplasmic segment spans residues Lys447–Phe496. Residues Asn497–Phe522 traverse the membrane as a helical segment. The Lumenal segment spans residues Asp523–Ser537. Residues Val538–Ile555 traverse the membrane as a helical segment. The Cytoplasmic portion of the chain corresponds to Ile556 to Arg603. An intramembrane segment occupies Ile604–Thr624. The Cytoplasmic portion of the chain corresponds to Phe625–Arg702.

The protein belongs to the ATG9 family. Homotrimer; forms a homotrimer with a central pore that forms a path between the two membrane leaflets. Interacts with ctl1. Post-translationally, phosphorylated by atg1. Atg1 phosphorylation is required for preautophagosome elongation.

It is found in the preautophagosomal structure membrane. It localises to the cytoplasmic vesicle membrane. The protein localises to the golgi apparatus membrane. Its subcellular location is the endoplasmic reticulum membrane. It carries out the reaction a 1,2-diacyl-sn-glycero-3-phosphocholine(in) = a 1,2-diacyl-sn-glycero-3-phosphocholine(out). The catalysed reaction is a 1,2-diacyl-sn-glycero-3-phospho-L-serine(in) = a 1,2-diacyl-sn-glycero-3-phospho-L-serine(out). It catalyses the reaction a 1,2-diacyl-sn-glycero-3-phosphoethanolamine(in) = a 1,2-diacyl-sn-glycero-3-phosphoethanolamine(out). The enzyme catalyses a 1,2-diacyl-sn-glycero-3-phospho-(1D-myo-inositol-3-phosphate)(in) = a 1,2-diacyl-sn-glycero-3-phospho-(1D-myo-inositol-3-phosphate)(out). Its function is as follows. Phospholipid scramblase involved in autophagy and cytoplasm to vacuole transport (Cvt) vesicle formation. Cycles between the preautophagosomal structure/phagophore assembly site (PAS) and the cytoplasmic vesicle pool and supplies membrane for the growing autophagosome. Lipid scramblase activity plays a key role in preautophagosomal structure/phagophore assembly by distributing the phospholipids that arrive through atg2 from the cytoplasmic to the luminal leaflet of the bilayer, thereby driving autophagosomal membrane expansion. Also involved in endoplasmic reticulum-specific autophagic process and is essential for the survival of cells subjected to severe ER stress. Different machineries are required for anterograde trafficking to the PAS during either the Cvt pathway or bulk autophagy and for retrograde trafficking. Has a role in meiosis and sporulation. In Schizosaccharomyces pombe (strain 972 / ATCC 24843) (Fission yeast), this protein is Autophagy-related protein 9.